We begin with the raw amino-acid sequence, 215 residues long: 7-cyano-7-deazaguanine synthase (215 aa).

8 to 18 (LSAGLDSTVSL) lines the ATP pocket. Cys-191, Cys-199, Cys-202, and Cys-205 together coordinate Zn(2+).

The protein belongs to the QueC family. As to quaternary structure, homodimer. Zn(2+) serves as cofactor.

The catalysed reaction is 7-carboxy-7-deazaguanine + NH4(+) + ATP = 7-cyano-7-deazaguanine + ADP + phosphate + H2O + H(+). It participates in purine metabolism; 7-cyano-7-deazaguanine biosynthesis. In terms of biological role, catalyzes the ATP-dependent conversion of 7-carboxy-7-deazaguanine (CDG) to 7-cyano-7-deazaguanine (preQ(0)). The chain is 7-cyano-7-deazaguanine synthase from Carboxydothermus hydrogenoformans (strain ATCC BAA-161 / DSM 6008 / Z-2901).